The following is a 300-amino-acid chain: Transcription initiation factor IIB (300 aa).

Residues 2–34 form a TFIIB-type zinc finger; the sequence is TKQKVCPVCGSTEFIYDPERGEIVCARCGYVIE. Residues cysteine 7, cysteine 10, cysteine 26, and cysteine 29 each contribute to the Zn(2+) site. Repeat copies occupy residues 114–197 and 210–291.

This sequence belongs to the TFIIB family.

Functionally, stabilizes TBP binding to an archaeal box-A promoter. Also responsible for recruiting RNA polymerase II to the pre-initiation complex (DNA-TBP-TFIIB). This is Transcription initiation factor IIB from Pyrococcus horikoshii (strain ATCC 700860 / DSM 12428 / JCM 9974 / NBRC 100139 / OT-3).